A 109-amino-acid polypeptide reads, in one-letter code: Nucleoid-associated protein Ping_2276 (109 aa).

It belongs to the YbaB/EbfC family. As to quaternary structure, homodimer.

Its subcellular location is the cytoplasm. The protein localises to the nucleoid. Its function is as follows. Binds to DNA and alters its conformation. May be involved in regulation of gene expression, nucleoid organization and DNA protection. The chain is Nucleoid-associated protein Ping_2276 from Psychromonas ingrahamii (strain DSM 17664 / CCUG 51855 / 37).